Consider the following 273-residue polypeptide: Dermonecrotic toxin LruSicTox-alphaIC1d (273 aa).

The active site involves His-5. Mg(2+) is bound by residues Glu-25 and Asp-27. His-41 acts as the Nucleophile in catalysis. Disulfide bonds link Cys-45–Cys-51 and Cys-47–Cys-190. Asp-85 serves as a coordination point for Mg(2+).

It belongs to the arthropod phospholipase D family. Class II subfamily. It depends on Mg(2+) as a cofactor. In terms of tissue distribution, expressed by the venom gland.

The protein localises to the secreted. It carries out the reaction an N-(acyl)-sphingosylphosphocholine = an N-(acyl)-sphingosyl-1,3-cyclic phosphate + choline. The catalysed reaction is an N-(acyl)-sphingosylphosphoethanolamine = an N-(acyl)-sphingosyl-1,3-cyclic phosphate + ethanolamine. The enzyme catalyses a 1-acyl-sn-glycero-3-phosphocholine = a 1-acyl-sn-glycero-2,3-cyclic phosphate + choline. It catalyses the reaction a 1-acyl-sn-glycero-3-phosphoethanolamine = a 1-acyl-sn-glycero-2,3-cyclic phosphate + ethanolamine. Dermonecrotic toxins cleave the phosphodiester linkage between the phosphate and headgroup of certain phospholipids (sphingolipid and lysolipid substrates), forming an alcohol (often choline) and a cyclic phosphate. This toxin acts on sphingomyelin (SM). It may also act on ceramide phosphoethanolamine (CPE), lysophosphatidylcholine (LPC) and lysophosphatidylethanolamine (LPE), but not on lysophosphatidylserine (LPS), and lysophosphatidylglycerol (LPG). It acts by transphosphatidylation, releasing exclusively cyclic phosphate products as second products. Induces dermonecrosis, hemolysis, increased vascular permeability, edema, inflammatory response, and platelet aggregation. This is Dermonecrotic toxin LruSicTox-alphaIC1d from Loxosceles rufescens (Mediterranean recluse spider).